A 638-amino-acid polypeptide reads, in one-letter code: ATP-dependent zinc metalloprotease FtsH (638 aa).

The Cytoplasmic segment spans residues 1 to 7 (MRSTYKT). A helical membrane pass occupies residues 8-28 (IGLWVILIVLFVAFYNFFSQG). Over 29-102 (NDQVQEPSFT…KYEREEQNSL (74 aa)) the chain is Periplasmic. A helical membrane pass occupies residues 103 to 123 (WLTILGQWMPVVFLFLFFIFF). The Cytoplasmic segment spans residues 124–638 (MRQLQGGSGK…GLPAMEPKKA (515 aa)). 195–202 (GSPGTGKT) lines the ATP pocket. Residue histidine 417 participates in Zn(2+) binding. Glutamate 418 is an active-site residue. 2 residues coordinate Zn(2+): histidine 421 and aspartate 493. The disordered stretch occupies residues 596–638 (GGQLTRERPPPRVNAPPKATEKKDKRKILDALEGLPAMEPKKA). A compositionally biased stretch (basic and acidic residues) spans 614–625 (ATEKKDKRKILD).

The protein in the central section; belongs to the AAA ATPase family. In the C-terminal section; belongs to the peptidase M41 family. As to quaternary structure, homohexamer. Zn(2+) is required as a cofactor.

It localises to the cell inner membrane. Functionally, acts as a processive, ATP-dependent zinc metallopeptidase for both cytoplasmic and membrane proteins. Plays a role in the quality control of integral membrane proteins. The polypeptide is ATP-dependent zinc metalloprotease FtsH (Myxococcus xanthus (strain DK1622)).